The following is a 194-amino-acid chain: High mobility group protein B4 (194 aa).

DNA-binding regions (HMG box) lie at residues 9 to 79 and 93 to 161; these read PKAN…MNYF and PRRP…SVYR.

Belongs to the HMGB family.

It localises to the nucleus. The protein localises to the chromosome. The sequence is that of High mobility group protein B4 (HMGB4) from Bos taurus (Bovine).